Reading from the N-terminus, the 316-residue chain is 1-aminocyclopropane-1-carboxylate oxidase 2 (316 aa).

A Fe2OG dioxygenase domain is found at 153–253 (PNFGTKVSNY…RMSLASFYNP (101 aa)). His-177, Asp-179, and His-234 together coordinate Fe cation.

It belongs to the iron/ascorbate-dependent oxidoreductase family. Requires Fe cation as cofactor. In terms of tissue distribution, leaves.

It catalyses the reaction 1-aminocyclopropane-1-carboxylate + L-ascorbate + O2 = ethene + L-dehydroascorbate + hydrogen cyanide + CO2 + 2 H2O. The protein operates within alkene biosynthesis; ethylene biosynthesis via S-adenosyl-L-methionine; ethylene from S-adenosyl-L-methionine: step 2/2. This Solanum lycopersicum (Tomato) protein is 1-aminocyclopropane-1-carboxylate oxidase 2 (ACO2).